Reading from the N-terminus, the 318-residue chain is Peroxisomal and mitochondrial division factor 1 (318 aa).

Positions 1–39 (MADVEDRAAKGISDYDQGGVKTTELERKIEDMENKNQEL) are disordered. Residues 1–291 (MADVEDRAAK…QKGSLEAEYQ (291 aa)) are Cytoplasmic-facing. Residues 19 to 260 (GVKTTELERK…KKVEEGNKTV (242 aa)) are a coiled coil. Residues 23-39 (TELERKIEDMENKNQEL) are compositionally biased toward basic and acidic residues. A helical transmembrane segment spans residues 292-312 (WPVVAAGSVGAAGLVAATFFV). Residues 313-318 (CYSKLR) lie on the Mitochondrial intermembrane side of the membrane.

Homodimer. Interacts with PMD2.

The protein localises to the peroxisome membrane. It localises to the mitochondrion outer membrane. In terms of biological role, involved in morphogenesis and proliferation of peroxisomes and mitochondria, independently from the previously defined pathway controlled by the FIS1-DRP3 complex. In Arabidopsis thaliana (Mouse-ear cress), this protein is Peroxisomal and mitochondrial division factor 1.